The primary structure comprises 270 residues: 3-methyl-2-oxobutanoate hydroxymethyltransferase (270 aa).

Residues Asp-41 and Asp-80 each coordinate Mg(2+). Residues 41-42 (DS), Asp-80, and Lys-109 contribute to the 3-methyl-2-oxobutanoate site. Residue Glu-111 coordinates Mg(2+). The active-site Proton acceptor is the Glu-178.

The protein belongs to the PanB family. Homodecamer; pentamer of dimers. Mg(2+) is required as a cofactor.

It localises to the cytoplasm. It catalyses the reaction 3-methyl-2-oxobutanoate + (6R)-5,10-methylene-5,6,7,8-tetrahydrofolate + H2O = 2-dehydropantoate + (6S)-5,6,7,8-tetrahydrofolate. The protein operates within cofactor biosynthesis; (R)-pantothenate biosynthesis; (R)-pantoate from 3-methyl-2-oxobutanoate: step 1/2. Functionally, catalyzes the reversible reaction in which hydroxymethyl group from 5,10-methylenetetrahydrofolate is transferred onto alpha-ketoisovalerate to form ketopantoate. This Thermotoga neapolitana (strain ATCC 49049 / DSM 4359 / NBRC 107923 / NS-E) protein is 3-methyl-2-oxobutanoate hydroxymethyltransferase.